Consider the following 497-residue polypeptide: Glutamyl-tRNA reductase (497 aa).

Residues T58 to R61, S118, E123 to Q125, and Q129 contribute to the substrate site. The Nucleophile role is filled by C59. Residue G214–A219 participates in NADP(+) binding. Residues V461–T477 are compositionally biased toward polar residues. Residues V461–S486 are disordered.

It belongs to the glutamyl-tRNA reductase family. As to quaternary structure, homodimer.

It catalyses the reaction (S)-4-amino-5-oxopentanoate + tRNA(Glu) + NADP(+) = L-glutamyl-tRNA(Glu) + NADPH + H(+). Its pathway is porphyrin-containing compound metabolism; protoporphyrin-IX biosynthesis; 5-aminolevulinate from L-glutamyl-tRNA(Glu): step 1/2. Its function is as follows. Catalyzes the NADPH-dependent reduction of glutamyl-tRNA(Glu) to glutamate 1-semialdehyde (GSA). This is Glutamyl-tRNA reductase from Corynebacterium jeikeium (strain K411).